Reading from the N-terminus, the 226-residue chain is Glyceraldehyde 3-phosphate phosphatase (226 aa).

Belongs to the HAD-like hydrolase superfamily. Requires Mg(2+) as cofactor.

In terms of biological role, catalyzes the dephosphorylation of D,L-glyceraldehyde 3-phosphate in vitro. The polypeptide is Glyceraldehyde 3-phosphate phosphatase (Methanothermobacter thermautotrophicus (strain ATCC 29096 / DSM 1053 / JCM 10044 / NBRC 100330 / Delta H) (Methanobacterium thermoautotrophicum)).